The sequence spans 561 residues: Phosphoinositide phospholipase C 1 (561 aa).

Positions 21–54 (EPPEEIKNLFHDYSQDDRMSADEMLRFVIQVQGE) constitute an EF-hand domain. Residues 105 to 249 (QDMNQPLSHY…LKNKILISTK (145 aa)) enclose the PI-PLC X-box domain. Catalysis depends on residues histidine 120 and histidine 166. A compositionally biased stretch (polar residues) spans 256 to 266 (QTQISKGSTTD). Residues 256–285 (QTQISKGSTTDESTRAKKISDAEEQVQEED) are disordered. A compositionally biased stretch (basic and acidic residues) spans 267–276 (ESTRAKKISD). The region spanning 294 to 410 (RDLISIHAGN…GYVKKPDVLL (117 aa)) is the PI-PLC Y-box domain. The 128-residue stretch at 414-541 (PEGEIFDPCS…PGIRAVRLHD (128 aa)) folds into the C2 domain. Residues aspartate 452, aspartate 458, aspartate 510, aspartate 512, and aspartate 518 each contribute to the Ca(2+) site.

Ca(2+) is required as a cofactor. Expressed in stems, leaves, roots, flowers and siliques. Predominant in the vascular tissues of roots and leaves.

It localises to the cell membrane. It carries out the reaction a 1,2-diacyl-sn-glycero-3-phospho-(1D-myo-inositol-4,5-bisphosphate) + H2O = 1D-myo-inositol 1,4,5-trisphosphate + a 1,2-diacyl-sn-glycerol + H(+). Functionally, the production of the second messenger molecules diacylglycerol (DAG) and inositol 1,4,5-trisphosphate (IP3) is mediated by activated phosphatidylinositol-specific phospholipase C enzymes. Required for secondary responses to abscisic acid signals. The chain is Phosphoinositide phospholipase C 1 (PLC1) from Arabidopsis thaliana (Mouse-ear cress).